We begin with the raw amino-acid sequence, 710 residues long: ATP-dependent RNA helicase DBP7 (710 aa).

A disordered region spans residues 1-97 (MSDNDGLMLM…KDVPPQPANA (97 aa)). Over residues 11 to 21 (NFTTESGPDNA) the composition is skewed to polar residues. Positions 54 to 68 (PAAAVEEAPAAAVPE) are enriched in low complexity. Residues 134-163 (DTFEALGVRGTLLEHLTGKMKIQKPTKIQK) carry the Q motif motif. The Helicase ATP-binding domain maps to 167 to 361 (PEVLNGKADL…DIALTDPKVI (195 aa)). An ATP-binding site is contributed by 180-187 (AQTGSGKT). The short motif at 296-299 (DEGD) is the DEAD box element. Residues 396–588 (AISELSRKAP…LLAPAFAAPV (193 aa)) form the Helicase C-terminal domain. Positions 669-690 (PKGMAAHRGKPATPKPKQDDAR) are disordered.

It belongs to the DEAD box helicase family. DDX31/DBP7 subfamily.

The protein localises to the nucleus. The protein resides in the nucleolus. It carries out the reaction ATP + H2O = ADP + phosphate + H(+). ATP-binding RNA helicase involved in the biogenesis of 60S ribosomal subunits and is required for the normal formation of 25S and 5.8S rRNAs. The protein is ATP-dependent RNA helicase DBP7 (DBP7) of Eremothecium gossypii (strain ATCC 10895 / CBS 109.51 / FGSC 9923 / NRRL Y-1056) (Yeast).